We begin with the raw amino-acid sequence, 1004 residues long: 2-oxoglutarate dehydrogenase E1 component (1004 aa).

This sequence belongs to the alpha-ketoglutarate dehydrogenase family. Homodimer. Part of the 2-oxoglutarate dehydrogenase (OGDH) complex composed of E1 (2-oxoglutarate dehydrogenase), E2 (dihydrolipoamide succinyltransferase) and E3 (dihydrolipoamide dehydrogenase); the complex contains multiple copies of the three enzymatic components (E1, E2 and E3). The cofactor is thiamine diphosphate.

It catalyses the reaction N(6)-[(R)-lipoyl]-L-lysyl-[protein] + 2-oxoglutarate + H(+) = N(6)-[(R)-S(8)-succinyldihydrolipoyl]-L-lysyl-[protein] + CO2. E1 component of the 2-oxoglutarate dehydrogenase (OGDH) complex which catalyzes the decarboxylation of 2-oxoglutarate, the first step in the conversion of 2-oxoglutarate to succinyl-CoA and CO(2). The sequence is that of 2-oxoglutarate dehydrogenase E1 component from Brucella abortus (strain S19).